We begin with the raw amino-acid sequence, 162 residues long: Protein NrdI (162 aa).

Belongs to the NrdI family.

Its function is as follows. Probably involved in ribonucleotide reductase function. This chain is Protein NrdI, found in Streptococcus pyogenes serotype M2 (strain MGAS10270).